Reading from the N-terminus, the 157-residue chain is Ribosomal RNA large subunit methyltransferase H (157 aa).

S-adenosyl-L-methionine contacts are provided by residues L73, G104, and 121–126 (LSPLTL).

Belongs to the RNA methyltransferase RlmH family. As to quaternary structure, homodimer.

It is found in the cytoplasm. The enzyme catalyses pseudouridine(1915) in 23S rRNA + S-adenosyl-L-methionine = N(3)-methylpseudouridine(1915) in 23S rRNA + S-adenosyl-L-homocysteine + H(+). Specifically methylates the pseudouridine at position 1915 (m3Psi1915) in 23S rRNA. The polypeptide is Ribosomal RNA large subunit methyltransferase H (Acidithiobacillus ferrooxidans (strain ATCC 23270 / DSM 14882 / CIP 104768 / NCIMB 8455) (Ferrobacillus ferrooxidans (strain ATCC 23270))).